Reading from the N-terminus, the 694-residue chain is Cyclic nucleotide-gated ion channel 4 (694 aa).

Residues 1 to 15 (MATEQEFTRASRFSR) are compositionally biased toward basic and acidic residues. The tract at residues 1 to 64 (MATEQEFTRA…RIGLTCGGRR (64 aa)) is disordered. Over 1-92 (MATEQEFTRA…RSKWVREWNK (92 aa)) the chain is Cytoplasmic. Residues 24–53 (SEEDNTEEEDEEEEEMEEIEEEEEEEEEED) are compositionally biased toward acidic residues. The helical transmembrane segment at 93–113 (VFLLVCATGLFVDPLFLYTLS) threads the bilayer. Topologically, residues 114–126 (VSDTCMCLLVDGW) are extracellular. The chain crosses the membrane as a helical span at residues 127 to 147 (LALTVTALRSMTDLLHLWNIW). The Cytoplasmic segment spans residues 148–187 (IQFKIARRWPYPGGDSDGDTNKGGGTRGSTRVAPPYVKKN). Residues 188-208 (GFFFDLFVILPLPQVVLWVVI) form a helical membrane-spanning segment. Topologically, residues 209–216 (PSLLKRGS) are extracellular. Residues 217-237 (VTLVVSVLLVTFLFQYLPKIY) form a helical membrane-spanning segment. Over 238 to 251 (HSIRHLRRNATLSG) the chain is Cytoplasmic. A helical transmembrane segment spans residues 252–272 (YIFGTVWWGIALNMIAYFVAA). Residues 273–392 (HAAGACWYLL…LESTTEWSEV (120 aa)) lie on the Extracellular side of the membrane. The chain crosses the membrane as a helical span at residues 393-413 (VFNIIVLTSGLLLVTMLIGNI). Residues 414–694 (KVFLHATTSK…KPNPDDFDDY (281 aa)) are Cytoplasmic-facing. A nucleoside 3',5'-cyclic phosphate contacts are provided by residues 496-626 (LFQH…ARYY) and Asp-565. Residues 610–626 (FRYTFVNEKVKRSARYY) are calmodulin-binding. The region spanning 631–660 (RTWAAVAVQLAWRRYKHRLTLTSLSFIRPR) is the IQ domain.

Belongs to the cyclic nucleotide-gated cation channel (TC 1.A.1.5) family. As to quaternary structure, homotetramer or heterotetramer.

It is found in the cell membrane. Its function is as follows. Acts as a cyclic nucleotide-gated ion channel. Permeable to potassium and sodium in a cyclic nucleotide-dependent fashion (cAMP or cGMP). Might constitute a common downstream component of the signaling pathways leading to hypersensitive response (HR). The chain is Cyclic nucleotide-gated ion channel 4 (CNGC4) from Arabidopsis thaliana (Mouse-ear cress).